The following is a 369-amino-acid chain: Delta(14)-sterol reductase (369 aa).

7 consecutive transmembrane segments (helical) span residues 15–34, 54–76, 86–105, 146–168, 178–195, 208–230, and 240–262; these read QSVYVLVFYFVYLAVAGEIL, CNGLLALILLVAILGICAKLGIV, LELLSATFIFCVLVTLALYV, FFFVRAGMMGWLLINLSILAKSV, ILYQIFCALYILDYFVHE, RLGFMLVFGDLLWIPFTFSIQGW, and TVPAIVVNCLVFLIGYMVFRGAN. NADP(+)-binding positions include Lys265, Lys269, Leu289, Trp294, and 301-302; that span reads NY. The helical transmembrane segment at 275–297 threads the bilayer; the sequence is PIWGKPPVVVGGKLLVSGYWGIA. Residues 317 to 336 form a helical membrane-spanning segment; the sequence is GISSPVPYFYPIYLLILLIW. NADP(+)-binding positions include Asp341, 345 to 349, and Tyr356; that span reads CAEKY.

The protein belongs to the ERG4/ERG24 family.

It localises to the membrane. The enzyme catalyses 4,4-dimethyl-5alpha-cholesta-8,24-dien-3beta-ol + NADP(+) = 4,4-dimethyl-5alpha-cholesta-8,14,24-trien-3beta-ol + NADPH + H(+). Its pathway is steroid biosynthesis; zymosterol biosynthesis; zymosterol from lanosterol: step 2/6. In terms of biological role, reduces the C14=C15 double bond of 4,4-dimethyl-cholesta-8,14,24-trienol to produce 4,4-dimethyl-cholesta-8,24-dienol. Required for cell division and expansion and is involved in proper organization of the embryo. This chain is Delta(14)-sterol reductase (FK), found in Arabidopsis thaliana (Mouse-ear cress).